Reading from the N-terminus, the 422-residue chain is uncharacterized protein (422 aa).

It belongs to the asfivirus K421R family.

Its subcellular location is the virion. This is an uncharacterized protein from Ornithodoros (relapsing fever ticks).